Reading from the N-terminus, the 272-residue chain is 2-dehydro-3-deoxyphosphooctonate aldolase (272 aa).

The protein belongs to the KdsA family.

The protein resides in the cytoplasm. The enzyme catalyses D-arabinose 5-phosphate + phosphoenolpyruvate + H2O = 3-deoxy-alpha-D-manno-2-octulosonate-8-phosphate + phosphate. Its pathway is carbohydrate biosynthesis; 3-deoxy-D-manno-octulosonate biosynthesis; 3-deoxy-D-manno-octulosonate from D-ribulose 5-phosphate: step 2/3. It functions in the pathway bacterial outer membrane biogenesis; lipopolysaccharide biosynthesis. The protein is 2-dehydro-3-deoxyphosphooctonate aldolase of Geobacter metallireducens (strain ATCC 53774 / DSM 7210 / GS-15).